Here is a 788-residue protein sequence, read N- to C-terminus: Multi-functional prenyltransferase ltmE (788 aa).

Substrate contacts are provided by Lys-18 and His-51. Asp-58 lines the Mg(2+) pocket. Residues Arg-67, Lys-151, Thr-152, Gln-182, Asn-189, and Lys-199 each coordinate substrate. Residues 283-337 (DTLDGDDLTRPSTITQHEQDDHVDRAAIDAKSDASGSSNKSLTPPETAPTTDTLS) are disordered. Basic and acidic residues predominate over residues 299-314 (HEQDDHVDRAAIDAKS). Positions 316–337 (ASGSSNKSLTPPETAPTTDTLS) are enriched in polar residues. An L-tryptophan-binding site is contributed by 404–405 (MA). Residues Arg-427, Arg-599, Lys-601, Tyr-603, and Tyr-687 each coordinate substrate.

This sequence in the N-terminal section; belongs to the FPP/GGPP synthase family. In the C-terminal section; belongs to the tryptophan dimethylallyltransferase family. Mg(2+) is required as a cofactor.

Its pathway is secondary metabolite biosynthesis. In terms of biological role, multi-functional prenyltransferase; part of the gene cluster that mediates the biosynthesis of lolitrems, indole-diterpene mycotoxins that are potent tremorgens in mammals, and are synthesized by clavicipitaceous fungal endophytes in association with their grass hosts. The geranylgeranyl diphosphate (GGPP) synthase ltmG is proposed to catalyze the first step in lolitrem biosynthesis. LtmG catalyzes a series of iterative condensations of isopentenyl diphosphate (IPP) with dimethylallyl diphosphate (DMAPP), geranyl diphosphate (GPP), and farnesyl diphosphate (FPP), to form GGPP. GGPP then condenses with indole-3-glycerol phosphate to form 3-geranylgeranylindole, an acyclic intermediate, to be incorporated into paxilline. Either ltmG or ltmC could be responsible for this step, as both are putative prenyl transferases. The FAD-dependent monooxygenase ltmM then catalyzes the epoxidation of the two terminal alkenes of the geranylgeranyl moiety, which is subsequently cyclized by ltmB, to paspaline. The cytochrome P450 monooxygenases ltmQ and ltmP can sequentially oxidize paspaline to terpendole E and terpendole F. Alternatively, ltmP converts paspaline to an intermediate which is oxidized by ltmQ to terpendole F. LtmF, ltmK, ltmE and ltmJ appear to be unique to the epichloe endophytes. The prenyltransferase ltmF is involved in the 27-hydroxyl-O-prenylation. The cytochrome P450 monooxygenase ltmK is required for the oxidative acetal ring formation. The multi-functional prenyltransferase ltmE is required for C20- and C21-prenylations of the indole ring of paspalanes and acts together with the cytochrome P450 monooxygenase ltmJ to yield lolitremanes by multiple oxidations and ring closures. The stereoisomer pairs of lolitriol and lolitrem N or lolitrem B and lolitrem F may be attributed to variations in the way in which ring closure can occur under the action of ltmJ. While the major product of this pathway is lolitrem B, the prenyl transferases and cytochrome P450 monooxygenases identified in this pathway have a remarkable versatility in their regio- and stereo-specificities to generate a diverse range of metabolites that are products of a metabolic grid rather than a linear pathway. This chain is Multi-functional prenyltransferase ltmE, found in Epichloe festucae var. lolii (Neotyphodium lolii).